Consider the following 241-residue polypeptide: Probable 2-phosphosulfolactate phosphatase (241 aa).

It belongs to the ComB family. It depends on Mg(2+) as a cofactor.

The enzyme catalyses (2R)-O-phospho-3-sulfolactate + H2O = (2R)-3-sulfolactate + phosphate. The chain is Probable 2-phosphosulfolactate phosphatase from Caldanaerobacter subterraneus subsp. tengcongensis (strain DSM 15242 / JCM 11007 / NBRC 100824 / MB4) (Thermoanaerobacter tengcongensis).